The primary structure comprises 921 residues: Isoleucine--tRNA ligase (921 aa).

The short motif at 57–67 (PYANGDIHMGH) is the 'HIGH' region element. Residue glutamate 552 coordinates L-isoleucyl-5'-AMP. The short motif at 593–597 (KMSKS) is the 'KMSKS' region element. An ATP-binding site is contributed by lysine 596. Zn(2+) contacts are provided by cysteine 888, cysteine 891, cysteine 908, and cysteine 911.

This sequence belongs to the class-I aminoacyl-tRNA synthetase family. IleS type 1 subfamily. In terms of assembly, monomer. The cofactor is Zn(2+).

Its subcellular location is the cytoplasm. The catalysed reaction is tRNA(Ile) + L-isoleucine + ATP = L-isoleucyl-tRNA(Ile) + AMP + diphosphate. In terms of biological role, catalyzes the attachment of isoleucine to tRNA(Ile). As IleRS can inadvertently accommodate and process structurally similar amino acids such as valine, to avoid such errors it has two additional distinct tRNA(Ile)-dependent editing activities. One activity is designated as 'pretransfer' editing and involves the hydrolysis of activated Val-AMP. The other activity is designated 'posttransfer' editing and involves deacylation of mischarged Val-tRNA(Ile). In Bacillus cereus (strain AH187), this protein is Isoleucine--tRNA ligase.